The chain runs to 270 residues: Proteasome subunit alpha type-1 (270 aa).

The tract at residues 239 to 270 is disordered; the sequence is SMEAAEEAPAAEAESSSMQEEDKGTDAAPMDI. Positions 245–256 are enriched in low complexity; it reads EAPAAEAESSSM.

This sequence belongs to the peptidase T1A family. In terms of assembly, the 26S proteasome consists of a 20S proteasome core and two 19S regulatory subunits. The 20S proteasome core is composed of 28 subunits that are arranged in four stacked rings, resulting in a barrel-shaped structure. The two end rings are each formed by seven alpha subunits, and the two central rings are each formed by seven beta subunits. The catalytic chamber with the active sites is on the inside of the barrel.

It localises to the cytoplasm. It is found in the nucleus. In terms of biological role, the proteasome is a multicatalytic proteinase complex which is characterized by its ability to cleave peptides with Arg, Phe, Tyr, Leu, and Glu adjacent to the leaving group at neutral or slightly basic pH. The proteasome has an ATP-dependent proteolytic activity. The chain is Proteasome subunit alpha type-1 (PAF1) from Oryza sativa subsp. japonica (Rice).